The primary structure comprises 332 residues: 4-hydroxy-3-methylbut-2-enyl diphosphate reductase (332 aa).

C34 serves as a coordination point for [4Fe-4S] cluster. Positions 63 and 96 each coordinate (2E)-4-hydroxy-3-methylbut-2-enyl diphosphate. Positions 63 and 96 each coordinate dimethylallyl diphosphate. Isopentenyl diphosphate is bound by residues H63 and H96. [4Fe-4S] cluster is bound at residue C118. (2E)-4-hydroxy-3-methylbut-2-enyl diphosphate is bound at residue H146. Position 146 (H146) interacts with dimethylallyl diphosphate. H146 is a binding site for isopentenyl diphosphate. E148 acts as the Proton donor in catalysis. Residue T186 participates in (2E)-4-hydroxy-3-methylbut-2-enyl diphosphate binding. A [4Fe-4S] cluster-binding site is contributed by C216. Positions 244, 245, 246, and 289 each coordinate (2E)-4-hydroxy-3-methylbut-2-enyl diphosphate. Residues S244, S245, N246, and S289 each coordinate dimethylallyl diphosphate. 4 residues coordinate isopentenyl diphosphate: S244, S245, N246, and S289.

The protein belongs to the IspH family. [4Fe-4S] cluster is required as a cofactor.

It carries out the reaction isopentenyl diphosphate + 2 oxidized [2Fe-2S]-[ferredoxin] + H2O = (2E)-4-hydroxy-3-methylbut-2-enyl diphosphate + 2 reduced [2Fe-2S]-[ferredoxin] + 2 H(+). The enzyme catalyses dimethylallyl diphosphate + 2 oxidized [2Fe-2S]-[ferredoxin] + H2O = (2E)-4-hydroxy-3-methylbut-2-enyl diphosphate + 2 reduced [2Fe-2S]-[ferredoxin] + 2 H(+). It functions in the pathway isoprenoid biosynthesis; dimethylallyl diphosphate biosynthesis; dimethylallyl diphosphate from (2E)-4-hydroxy-3-methylbutenyl diphosphate: step 1/1. The protein operates within isoprenoid biosynthesis; isopentenyl diphosphate biosynthesis via DXP pathway; isopentenyl diphosphate from 1-deoxy-D-xylulose 5-phosphate: step 6/6. In terms of biological role, catalyzes the conversion of 1-hydroxy-2-methyl-2-(E)-butenyl 4-diphosphate (HMBPP) into a mixture of isopentenyl diphosphate (IPP) and dimethylallyl diphosphate (DMAPP). Acts in the terminal step of the DOXP/MEP pathway for isoprenoid precursor biosynthesis. The polypeptide is 4-hydroxy-3-methylbut-2-enyl diphosphate reductase (Mycolicibacterium paratuberculosis (strain ATCC BAA-968 / K-10) (Mycobacterium paratuberculosis)).